The chain runs to 556 residues: Arginine--tRNA ligase (556 aa).

Positions A132 to H142 match the 'HIGH' region motif.

Belongs to the class-I aminoacyl-tRNA synthetase family. In terms of assembly, monomer.

The protein localises to the cytoplasm. It carries out the reaction tRNA(Arg) + L-arginine + ATP = L-arginyl-tRNA(Arg) + AMP + diphosphate. The polypeptide is Arginine--tRNA ligase (Bacillus licheniformis (strain ATCC 14580 / DSM 13 / JCM 2505 / CCUG 7422 / NBRC 12200 / NCIMB 9375 / NCTC 10341 / NRRL NRS-1264 / Gibson 46)).